Consider the following 201-residue polypeptide: Dephospho-CoA kinase (201 aa).

The region spanning Ser-4 to Gln-201 is the DPCK domain. Residue Ala-12 to Thr-17 participates in ATP binding.

Belongs to the CoaE family.

Its subcellular location is the cytoplasm. The enzyme catalyses 3'-dephospho-CoA + ATP = ADP + CoA + H(+). The protein operates within cofactor biosynthesis; coenzyme A biosynthesis; CoA from (R)-pantothenate: step 5/5. Catalyzes the phosphorylation of the 3'-hydroxyl group of dephosphocoenzyme A to form coenzyme A. The polypeptide is Dephospho-CoA kinase (Legionella pneumophila (strain Lens)).